Consider the following 242-residue polypeptide: Putative ABC transporter ATP-binding protein TTE0246 (242 aa).

Positions 5 to 242 constitute an ABC transporter domain; it reads FELKNVSYFY…EKLLLKANLI (238 aa). An ATP-binding site is contributed by 38–45; the sequence is GANGSGKS.

The protein belongs to the ABC transporter superfamily.

The protein resides in the cell membrane. Its function is as follows. Probably part of an ABC transporter complex. Responsible for energy coupling to the transport system. The polypeptide is Putative ABC transporter ATP-binding protein TTE0246 (Caldanaerobacter subterraneus subsp. tengcongensis (strain DSM 15242 / JCM 11007 / NBRC 100824 / MB4) (Thermoanaerobacter tengcongensis)).